The following is a 207-amino-acid chain: Ribonuclease HII (207 aa).

Residues 20-207 (QLFAGVDEVG…KPVKRVLGIE (188 aa)) form the RNase H type-2 domain. A divalent metal cation contacts are provided by D26, E27, and D118.

This sequence belongs to the RNase HII family. The cofactor is Mn(2+). Mg(2+) is required as a cofactor.

Its subcellular location is the cytoplasm. It catalyses the reaction Endonucleolytic cleavage to 5'-phosphomonoester.. Endonuclease that specifically degrades the RNA of RNA-DNA hybrids. This Aliivibrio fischeri (strain ATCC 700601 / ES114) (Vibrio fischeri) protein is Ribonuclease HII.